The sequence spans 218 residues: Radial spoke head 1 homolog (218 aa).

The segment covering M1–Q13 has biased composition (acidic residues). The tract at residues M1–E48 is disordered. MORN repeat units follow at residues Y19–T42, Y43–R65, Y66–K88, Y89–T111, Y112–S134, and Y158–E180. Basic and acidic residues predominate over residues E20–G31.

In terms of assembly, component of the axonemal radial spoke complexes. Interacts with septin SEPT7. Testis-specific.

It localises to the cytoplasm. The protein resides in the cytoskeleton. Its subcellular location is the cilium axoneme. The protein localises to the flagellum basal body. It is found in the flagellum axoneme. Its function is as follows. Functions as part of axonemal radial spoke complexes that play an important part in the motility of sperm and cilia. This is Radial spoke head 1 homolog (rsph1) from Cyprinus carpio (Common carp).